We begin with the raw amino-acid sequence, 500 residues long: Probable 26S proteasome non-ATPase regulatory subunit 3 (500 aa).

Residues 253–432 (ARFLYYLGRI…GYMRTKESTD (180 aa)) form the PCI domain. Residues 462 to 484 (RYPPKSYGKELESAEERREREQQ) are disordered. Basic and acidic residues predominate over residues 468–484 (YGKELESAEERREREQQ).

This sequence belongs to the proteasome subunit S3 family. The 26S proteasome is composed of a core protease, known as the 20S proteasome, capped at one or both ends by the 19S regulatory complex (RC). The RC is composed of at least 18 different subunits in two subcomplexes, the base and the lid, which form the portions proximal and distal to the 20S proteolytic core, respectively.

In terms of biological role, acts as a regulatory subunit of the 26 proteasome which is involved in the ATP-dependent degradation of ubiquitinated proteins. This Anopheles stephensi (Indo-Pakistan malaria mosquito) protein is Probable 26S proteasome non-ATPase regulatory subunit 3 (DOXA2).